The sequence spans 693 residues: Transcription activator of gluconeogenesis BC1G_14637 (693 aa).

The segment covering 1–12 has biased composition (acidic residues); that stretch reads MSGETEIDDPEV. The tract at residues 1–75 is disordered; sequence MSGETEIDDP…KFDPKDPLRP (75 aa). The segment covering 21–49 has biased composition (basic and acidic residues); it reads YSDHEQELDVIGKEGDNQEMAEQKVRPDG. Residues 52-62 show a composition bias toward polar residues; sequence NGNTVGATATV. Residues 65-74 show a composition bias toward basic and acidic residues; that stretch reads PKFDPKDPLR. The segment at residues 84-112 is a DNA-binding region (zn(2)-C6 fungal-type); the sequence is CFACQRAHLTCGDERPCQRCIKRGLADAC. Composition is skewed to polar residues over residues 144 to 155 and 275 to 287; these read SSNRATAASTPT and SAET…SAGM. Disordered stretches follow at residues 144-170, 273-299, 350-413, and 531-567; these read SSNR…QPDT, SGSA…FSNN, TSGS…RNRD, and NLNT…DSNP. Residues 356-367 are compositionally biased toward low complexity; it reads SPSTDASPAAST. Polar residues predominate over residues 369–379; that stretch reads GFESSPTTTNY. Positions 394 to 408 are enriched in low complexity; sequence KSGPSGKLGPSGILG.

The protein belongs to the ERT1/acuK family.

The protein resides in the nucleus. Its function is as follows. Transcription factor which regulates nonfermentable carbon utilization. Activator of gluconeogenetic genes. The chain is Transcription activator of gluconeogenesis BC1G_14637 from Botryotinia fuckeliana (strain B05.10) (Noble rot fungus).